Reading from the N-terminus, the 411-residue chain is Glycerol-3-phosphate dehydrogenase [NAD(+)] (411 aa).

NAD(+) contacts are provided by residues 71–76, phenylalanine 103, and phenylalanine 159; that span reads GSGNWG. Lysine 182 is a substrate binding site. Residue alanine 215 coordinates NAD(+). Lysine 275 serves as the catalytic Proton acceptor. Residues arginine 340 and glutamine 369 each coordinate NAD(+). 340 to 341 contributes to the substrate binding site; the sequence is RN.

It belongs to the NAD-dependent glycerol-3-phosphate dehydrogenase family.

It catalyses the reaction sn-glycerol 3-phosphate + NAD(+) = dihydroxyacetone phosphate + NADH + H(+). The protein is Glycerol-3-phosphate dehydrogenase [NAD(+)] (GPD) of Lachancea thermotolerans (Yeast).